The following is a 208-amino-acid chain: FMN-dependent NADH:quinone oxidoreductase (208 aa).

FMN is bound by residues 17–19 (SNS), 99–102 (MWNL), and 143–146 (SRGG).

It belongs to the azoreductase type 1 family. In terms of assembly, homodimer. FMN serves as cofactor.

The enzyme catalyses 2 a quinone + NADH + H(+) = 2 a 1,4-benzosemiquinone + NAD(+). It carries out the reaction N,N-dimethyl-1,4-phenylenediamine + anthranilate + 2 NAD(+) = 2-(4-dimethylaminophenyl)diazenylbenzoate + 2 NADH + 2 H(+). Quinone reductase that provides resistance to thiol-specific stress caused by electrophilic quinones. In terms of biological role, also exhibits azoreductase activity. Catalyzes the reductive cleavage of the azo bond in aromatic azo compounds to the corresponding amines. The polypeptide is FMN-dependent NADH:quinone oxidoreductase (Staphylococcus carnosus (strain TM300)).